The chain runs to 612 residues: Peroxisomal carnitine O-octanoyltransferase (612 aa).

Position 1 is an N-acetylmethionine (methionine 1). Lysine 40 and lysine 57 each carry N6-succinyllysine. The Proton acceptor role is filled by histidine 327. CoA contacts are provided by residues lysine 406 and lysine 410 to aspartate 417. The residue at position 406 (lysine 406) is an N6-acetyllysine; alternate. Lysine 406 is modified (N6-succinyllysine; alternate). Positions 439, 441, and 452 each coordinate (R)-carnitine. The Microbody targeting signal motif lies at proline 610–leucine 612.

It belongs to the carnitine/choline acetyltransferase family. As to quaternary structure, monomer.

The protein resides in the peroxisome. It carries out the reaction octanoyl-CoA + (R)-carnitine = O-octanoyl-(R)-carnitine + CoA. It catalyses the reaction 4,8-dimethylnonanoyl-CoA + (R)-carnitine = O-4,8-dimethylnonanoyl-(R)-carnitine + CoA. The protein operates within lipid metabolism; fatty acid beta-oxidation. Functionally, beta-oxidation of fatty acids. The highest activity concerns the C6 to C10 chain length substrate. The sequence is that of Peroxisomal carnitine O-octanoyltransferase (CROT) from Bos taurus (Bovine).